A 354-amino-acid chain; its full sequence is Serum paraoxonase/arylesterase 2 (354 aa).

A disulfide bridge links Cys42 with Cys352. Positions 53 and 54 each coordinate Ca(2+). The active-site Proton acceptor is His114. Residues Ile116, Asn167, Asp168, and Asn223 each coordinate Ca(2+). Asn254 carries N-linked (GlcNAc...) asparagine glycosylation. The Ca(2+) site is built by Asp268 and Asn269. Residues Asn269 and Asn323 are each glycosylated (N-linked (GlcNAc...) asparagine).

The protein belongs to the paraoxonase family. As to quaternary structure, homotrimer. Requires Ca(2+) as cofactor. Glycosylated. In terms of processing, the signal sequence is not cleaved.

The protein resides in the membrane. It catalyses the reaction a phenyl acetate + H2O = a phenol + acetate + H(+). The enzyme catalyses an N-acyl-L-homoserine lactone + H2O = an N-acyl-L-homoserine + H(+). In terms of biological role, capable of hydrolyzing lactones and a number of aromatic carboxylic acid esters. The protein is Serum paraoxonase/arylesterase 2 (PON2) of Bos taurus (Bovine).